A 498-amino-acid chain; its full sequence is Cytochrome P450 monooxygenase ltmP (498 aa).

The first 21 residues, 1–21, serve as a signal peptide directing secretion; sequence MLMLHAVPVGICLLLWYVVYG. N-linked (GlcNAc...) asparagine glycosylation is present at N420. Residue C435 coordinates heme.

The protein belongs to the cytochrome P450 family. Heme serves as cofactor.

It functions in the pathway secondary metabolite biosynthesis. Functionally, cytochrome P450 monooxygenase; part of the gene clusters that mediates the biosynthesis of lolitrems, indole-diterpene mycotoxins that are potent tremorgens in mammals, and are synthesized by clavicipitaceous fungal endophytes in association with their grass hosts. The geranylgeranyl diphosphate (GGPP) synthase ltmG is proposed to catalyze the first step in lolitrem biosynthesis. LtmG catalyzes a series of iterative condensations of isopentenyl diphosphate (IPP) with dimethylallyl diphosphate (DMAPP), geranyl diphosphate (GPP), and farnesyl diphosphate (FPP), to form GGPP. GGPP then condenses with indole-3-glycerol phosphate to form 3-geranylgeranylindole, an acyclic intermediate, to be incorporated into paxilline. Either ltmG or ltmC could be responsible for this step, as both are putative prenyl transferases. The FAD-dependent monooxygenase ltmM then catalyzes the epoxidation of the two terminal alkenes of the geranylgeranyl moiety, which is subsequently cyclized by ltmB, to paspaline. The cytochrome P450 monooxygenases ltmQ and ltmP can sequentially oxidize paspaline to terpendole E and terpendole F. Alternatively, ltmP converts paspaline to an intermediate which is oxidized by ltmQ to terpendole F. LtmF, ltmK, ltmE and ltmJ appear to be unique to the epichloe endophytes. The prenyltransferase ltmF is involved in the 27-hydroxyl-O-prenylation. The cytochrome P450 monooxygenase ltmK is required for the oxidative acetal ring formation. The multi-functional prenyltransferase ltmE is required for C20- and C21-prenylations of the indole ring of paspalanes and acts together with the cytochrome P450 monooxygenase ltmJ to yield lolitremanes by multiple oxidations and ring closures. The stereoisomer pairs of lolitriol and lolitrem N or lolitrem B and lolitrem F may be attributed to variations in the way in which ring closure can occur under the action of ltmJ. While the major product of this pathway is lolitrem B, the prenyl transferases and cytochrome P450 monooxygenases identified in this pathway have a remarkable versatility in their regio- and stereo-specificities to generate a diverse range of metabolites that are products of a metabolic grid rather than a linear pathway. The sequence is that of Cytochrome P450 monooxygenase ltmP from Epichloe festucae var. lolii (Neotyphodium lolii).